The chain runs to 179 residues: Phospholipase A2 (179 aa).

The first 21 residues, 1 to 21, serve as a signal peptide directing secretion; it reads MHALRSSVLALWLCLHVSVRA. Residues 22–39 constitute a propeptide that is removed on maturation; it reads WMTYRSANGLDEYEPEDR. Residues tryptophan 47, glycine 49, and glycine 51 each contribute to the Ca(2+) site. Intrachain disulfides connect cysteine 48–cysteine 70, cysteine 69–cysteine 109, cysteine 76–cysteine 102, cysteine 100–cysteine 133, and cysteine 142–cysteine 150. Histidine 73 is a catalytic residue. Aspartate 74 is a binding site for Ca(2+). The active site involves aspartate 103. An N-linked (GlcNAc...) asparagine glycan is attached at asparagine 112.

Ca(2+) serves as cofactor. As to expression, expressed by the venom gland.

The protein localises to the secreted. The enzyme catalyses a 1,2-diacyl-sn-glycero-3-phosphocholine + H2O = a 1-acyl-sn-glycero-3-phosphocholine + a fatty acid + H(+). In terms of biological role, PLA2 catalyzes the calcium-dependent hydrolysis of the 2-acyl groups in 3-sn-phosphoglycerides. This is Phospholipase A2 from Xylocopa appendiculata circumvolans (Japanese carpenter bee).